The chain runs to 830 residues: Isethionate sulfite-lyase (830 aa).

The region spanning 31–700 (KRVFKLLERF…VVSATPNGRV (670 aa)) is the PFL domain. Residues Arg189, Gln193, 468–470 (CIE), and Arg678 each bind 2-hydroxyethane-1-sulfonate. Catalysis depends on Cys468, which acts as the Cysteine radical intermediate. Glu470 acts as the Proton acceptor in catalysis. The region spanning 707–830 (DGSSPSHGAD…LIARTGHDQM (124 aa)) is the Glycine radical domain. A Glycine radical modification is found at Gly805.

It belongs to the glycyl radical enzyme (GRE) family. In terms of assembly, homodimer. In terms of processing, requires the activating protein IslB to generate the key active site glycyl radical on Gly-805 that is involved in catalysis.

The catalysed reaction is 2-hydroxyethane-1-sulfonate = acetaldehyde + sulfite + H(+). The protein operates within organosulfur degradation; alkanesulfonate degradation. Involved in an anaerobic respiration pathway that converts the sulfonate taurine (2-aminoethanesulfonate) to ammonia, acetate and sulfide. Catalyzes the radical-mediated C-S bond cleavage of isethionate (2-hydroxyethanesulfonate) to form sulfite and acetaldehyde. Is not able to use any alternate organosulfonate or (S)-1,2-propanediol or choline as a substrate, showing that this enzyme is highly specific for isethionate. In Bilophila wadsworthia (strain 3_1_6), this protein is Isethionate sulfite-lyase.